The primary structure comprises 240 residues: Insulin-like growth factor-binding protein 6 (240 aa).

The N-terminal stretch at 1–27 (MTPHRLLPPLLLLLALLLAASPGGALA) is a signal peptide. The IGFBP N-terminal domain maps to 28–107 (RCPGCGQGVQ…LLGRGRCLPA (80 aa)). 5 cysteine pairs are disulfide-bonded: Cys29–Cys32, Cys40–Cys44, Cys57–Cys63, Cys71–Cys84, and Cys78–Cys104. The segment at 109 to 160 (APAVAEENPKESKPQAGTARPQDVNRRDQQRNPGTSTTPSQPNSAGVQDTEM) is disordered. A glycan (O-linked (HexNAc...) threonine) is linked at Thr126. The span at 139–155 (RNPGTSTTPSQPNSAGV) shows a compositional bias: polar residues. Ser144 is a glycosylation site (O-linked (HexNAc...) serine). Thr145 and Thr146 each carry an O-linked (HexNAc...) threonine glycan. Ser152 carries an O-linked (HexNAc...) serine glycan. One can recognise a Thyroglobulin type-1 domain in the interval 160–234 (MGPCRRHLDS…SPDGNGSSSC (75 aa)). 3 disulfides stabilise this stretch: Cys163–Cys190, Cys201–Cys212, and Cys214–Cys234. The tract at residues 217–240 (RMGKSLPGSPDGNGSSSCPTGSSG) is disordered. Residues 228-240 (GNGSSSCPTGSSG) show a composition bias toward polar residues.

As to quaternary structure, interacts (via C-terminal domain) with PHB2. In terms of processing, O-linked glycans consist of hexose (probably Gal), N-acetylhexosamine (probably GalNAc) and sialic acid residues. O-glycosylated with core 1 or possibly core 8 glycans. O-glycosylated on one site only in the region AA 143-168 in cerebrospinal fluid.

It localises to the secreted. Functionally, IGF-binding proteins prolong the half-life of the IGFs and have been shown to either inhibit or stimulate the growth promoting effects of the IGFs on cell culture. They alter the interaction of IGFs with their cell surface receptors. Activates the MAPK signaling pathway and induces cell migration. The polypeptide is Insulin-like growth factor-binding protein 6 (Homo sapiens (Human)).